The chain runs to 371 residues: Cytochrome b (371 aa).

Helical transmembrane passes span 24–44, 68–89, 104–124, and 169–189; these read FGSM…FLAL, WTMQ…YIHI, WLSG…GYVL, and FFAL…VHIV. The heme b site is built by H74 and H88. Positions 173 and 187 each coordinate heme b. H192 is a binding site for a ubiquinone. 4 consecutive transmembrane segments (helical) span residues 217 to 237, 279 to 299, 311 to 331, and 338 to 357; these read YKDT…MSFA, LGGT…PFTH, LSQL…WTAT, and FITI…MTNP.

The protein belongs to the cytochrome b family. The cytochrome bc1 complex contains 3 respiratory subunits (MT-CYB, CYC1 and UQCRFS1), 2 core proteins (UQCRC1 and UQCRC2) and probably 6 low-molecular weight proteins. The cofactor is heme b.

The protein resides in the mitochondrion inner membrane. Functionally, component of the ubiquinol-cytochrome c reductase complex (complex III or cytochrome b-c1 complex) that is part of the mitochondrial respiratory chain. The b-c1 complex mediates electron transfer from ubiquinol to cytochrome c. Contributes to the generation of a proton gradient across the mitochondrial membrane that is then used for ATP synthesis. In Homoroselaps lacteus (Spotted harlequin snake), this protein is Cytochrome b (MT-CYB).